We begin with the raw amino-acid sequence, 230 residues long: Increased recombination centers protein 19 (230 aa).

Belongs to the IRC19 family.

Its function is as follows. Involved in sporulation and maintenance of the mitochondrial DNA. Is probably involved in a pathway contributing to genomic integrity. This chain is Increased recombination centers protein 19 (IRC19), found in Saccharomyces cerevisiae (strain JAY291) (Baker's yeast).